Consider the following 213-residue polypeptide: 3-isopropylmalate dehydratase small subunit (213 aa).

This sequence belongs to the LeuD family. LeuD type 1 subfamily. In terms of assembly, heterodimer of LeuC and LeuD.

The catalysed reaction is (2R,3S)-3-isopropylmalate = (2S)-2-isopropylmalate. It functions in the pathway amino-acid biosynthesis; L-leucine biosynthesis; L-leucine from 3-methyl-2-oxobutanoate: step 2/4. Catalyzes the isomerization between 2-isopropylmalate and 3-isopropylmalate, via the formation of 2-isopropylmaleate. In Pseudomonas syringae pv. syringae (strain B728a), this protein is 3-isopropylmalate dehydratase small subunit.